The primary structure comprises 153 residues: NADPH-dependent 7-cyano-7-deazaguanine reductase (153 aa).

Cys51 acts as the Thioimide intermediate in catalysis. Asp58 acts as the Proton donor in catalysis. Substrate is bound by residues 73 to 75 (VES) and 92 to 93 (HE).

This sequence belongs to the GTP cyclohydrolase I family. QueF type 1 subfamily.

Its subcellular location is the cytoplasm. It carries out the reaction 7-aminomethyl-7-carbaguanine + 2 NADP(+) = 7-cyano-7-deazaguanine + 2 NADPH + 3 H(+). Its pathway is tRNA modification; tRNA-queuosine biosynthesis. Its function is as follows. Catalyzes the NADPH-dependent reduction of 7-cyano-7-deazaguanine (preQ0) to 7-aminomethyl-7-deazaguanine (preQ1). This is NADPH-dependent 7-cyano-7-deazaguanine reductase from Granulibacter bethesdensis (strain ATCC BAA-1260 / CGDNIH1).